The primary structure comprises 263 residues: Syntaxin-73 (263 aa).

Residues 1-240 (MGVIDLITRV…TVTKLRSSRN (240 aa)) are Cytoplasmic-facing. A Phosphoserine modification is found at Ser-12. The t-SNARE coiled-coil homology domain maps to 169 to 231 (YEMKRIKQAR…KSTNVRLKDT (63 aa)). Residues 241–261 (FCIDIILLCILLGIAAFIYNS) form a helical; Anchor for type IV membrane protein membrane-spanning segment. At 262-263 (VK) the chain is on the vesicular side.

Belongs to the syntaxin family. Part of the t-SNARE complex. As to expression, expressed in root, leaf, stem, flower and silique.

The protein localises to the membrane. Functionally, vesicle trafficking protein that functions in the secretory pathway. The protein is Syntaxin-73 (SYP73) of Arabidopsis thaliana (Mouse-ear cress).